The following is a 213-amino-acid chain: 3-isopropylmalate dehydratase small subunit (213 aa).

It belongs to the LeuD family. LeuD type 1 subfamily. In terms of assembly, heterodimer of LeuC and LeuD.

The catalysed reaction is (2R,3S)-3-isopropylmalate = (2S)-2-isopropylmalate. Its pathway is amino-acid biosynthesis; L-leucine biosynthesis; L-leucine from 3-methyl-2-oxobutanoate: step 2/4. Functionally, catalyzes the isomerization between 2-isopropylmalate and 3-isopropylmalate, via the formation of 2-isopropylmaleate. The chain is 3-isopropylmalate dehydratase small subunit from Neisseria meningitidis serogroup C (strain 053442).